The chain runs to 338 residues: MESRTDLISEKQCGCTYSNPDLAVQQESSSRWLVADVESLLGLPFNDLIFQAQTVHRQYHDANGVQLSTLLSVKTGGCSEDCAYCPQAARYHTGVENQAILSREEVVMAATKAKESGATRFCMGAAWRGPKQRDIEHMTELISAVKDLGLETCATLGILKPGQAVQLKQAGLDYYNHNLDTSPEFYGEVITTREYQNRLDTLDEVRGANINVCCGGIVGMGESRTARAGLIAQLASLDPYPESVPINYLVQVEGTPLYGIPELDPFEFVRSIAAARITMPRAKVRLSAGRRQMSEAIQALCFLAGANSIFYGDKLLTTGNPDTEQDAALLEKLGLHAL.

A Radical SAM core domain is found at 63 to 290; it reads NGVQLSTLLS…RAKVRLSAGR (228 aa). The [4Fe-4S] cluster site is built by C78, C82, and C85. [2Fe-2S] cluster is bound by residues C122, C153, C213, and R285.

This sequence belongs to the radical SAM superfamily. Biotin synthase family. In terms of assembly, homodimer. [4Fe-4S] cluster is required as a cofactor. Requires [2Fe-2S] cluster as cofactor.

It catalyses the reaction (4R,5S)-dethiobiotin + (sulfur carrier)-SH + 2 reduced [2Fe-2S]-[ferredoxin] + 2 S-adenosyl-L-methionine = (sulfur carrier)-H + biotin + 2 5'-deoxyadenosine + 2 L-methionine + 2 oxidized [2Fe-2S]-[ferredoxin]. It participates in cofactor biosynthesis; biotin biosynthesis; biotin from 7,8-diaminononanoate: step 2/2. In terms of biological role, catalyzes the conversion of dethiobiotin (DTB) to biotin by the insertion of a sulfur atom into dethiobiotin via a radical-based mechanism. The protein is Biotin synthase of Nitrosomonas eutropha (strain DSM 101675 / C91 / Nm57).